A 302-amino-acid chain; its full sequence is Putative peptide permease protein BOV_A0350 (302 aa).

Positions 1–22 (MRSSIHASRLRKMGQSIPASTG) are disordered. 6 helical membrane-spanning segments follow: residues 38–58 (IFGL…PLWL), 101–121 (LLVA…IGAI), 147–167 (IFLL…VVVI), 200–222 (AGLG…VVYA), 230–250 (ILLE…AASW), and 268–288 (WQWL…NFIG). An ABC transmembrane type-1 domain is found at 97-288 (GRISLLVAVS…LAVLAINFIG (192 aa)).

Belongs to the binding-protein-dependent transport system permease family. As to quaternary structure, the complex is composed of two ATP-binding proteins (BOV_A0347 and BOV_A0348), two transmembrane proteins (BOV_A0350 and BOV_A0351) and a solute-binding protein (BOV_A0352).

The protein localises to the cell inner membrane. Probably part of an ABC transporter complex that could be involved in peptide import. Probably responsible for the translocation of the substrate across the membrane. The protein is Putative peptide permease protein BOV_A0350 of Brucella ovis (strain ATCC 25840 / 63/290 / NCTC 10512).